Consider the following 191-residue polypeptide: dTTP/UTP pyrophosphatase (191 aa).

D69 (proton acceptor) is an active-site residue.

The protein belongs to the Maf family. YhdE subfamily. Requires a divalent metal cation as cofactor.

Its subcellular location is the cytoplasm. The enzyme catalyses dTTP + H2O = dTMP + diphosphate + H(+). It catalyses the reaction UTP + H2O = UMP + diphosphate + H(+). In terms of biological role, nucleoside triphosphate pyrophosphatase that hydrolyzes dTTP and UTP. May have a dual role in cell division arrest and in preventing the incorporation of modified nucleotides into cellular nucleic acids. The sequence is that of dTTP/UTP pyrophosphatase from Desulforamulus reducens (strain ATCC BAA-1160 / DSM 100696 / MI-1) (Desulfotomaculum reducens).